The following is a 441-amino-acid chain: ATP-dependent RNA helicase SUB2-1 (441 aa).

Acidic residues predominate over residues 1–19 (MSHEGEEDLLEYSDNEQDI). Residues 1–46 (MSHEGEEDLLEYSDNEQDIQVDASKAAEPSELDATTAEDASNGDAE) form a disordered region. Residues 57–85 (TGFKDFLLKPELARAIIDCGFEHPSEVQQ) carry the Q motif motif. One can recognise a Helicase ATP-binding domain in the interval 88-263 (IPQSIHGTDV…RRFLQNPLEI (176 aa)). 101-108 (AKSGLGKT) contributes to the ATP binding site. The DECD box motif lies at 210 to 213 (DECD). A Helicase C-terminal domain is found at 291 to 436 (KLAQLLDDLE…EFPEEGIDPS (146 aa)).

The protein belongs to the DEAD box helicase family. DECD subfamily.

It is found in the nucleus. It carries out the reaction ATP + H2O = ADP + phosphate + H(+). ATP-binding RNA helicase involved in transcription elongation and required for the export of mRNA out of the nucleus. SUB2 also plays a role in pre-mRNA splicing and spliceosome assembly. May be involved in rDNA and telomeric silencing, and maintenance of genome integrity. The sequence is that of ATP-dependent RNA helicase SUB2-1 (SUB2-1) from Vanderwaltozyma polyspora (strain ATCC 22028 / DSM 70294 / BCRC 21397 / CBS 2163 / NBRC 10782 / NRRL Y-8283 / UCD 57-17) (Kluyveromyces polysporus).